A 43-amino-acid polypeptide reads, in one-letter code: MKKAVIVENKGCATCSIGAACLVDGPIPDFEIAGATGLFGLWG.

A propeptide spanning residues 1 to 8 (MKKAVIVE) is cleaved from the precursor. Residues 9 to 43 (NKGCATCSIGAACLVDGPIPDFEIAGATGLFGLWG) constitute a cross-link (cyclopeptide (Asn-Gly)). A cross-link (2-cysteinyl-D-phenylalanine (Cys-Phe)) is located at residues 12 to 39 (CATCSIGAACLVDGPIPDFEIAGATGLF). The segment at residues 15–36 (CSIGAACLVDGPIPDFEIAGAT) is a cross-link (2-cysteinyl-D-allo-threonine (Cys-Thr)). The segment at residues 21–30 (CLVDGPIPDF) is a cross-link (2-cysteinyl-L-phenylalanine (Cys-Phe)).

The protein belongs to the bacteriocin class V family. This sactipeptide undergoes unique processing steps that include proteolytic cleavage after Glu-8, and covalent linkage of the alpha-amino of Asn-9 with the carboxyl of Gly-43 to form a cyclopeptide. Thioether cross-links are formed between cysteines and the alpha-carbons of other amino acids, Cys-12 to Phe-39, Cys-15 to Thr-36, and Cys-21 to Phe-30. In forming these cross-links, Thr-36 and Phe-39 are converted to D-amino acids. Propeptide cleavage and cyclopeptide formation only occur after all 3 thioether cross-links are formed.

It is found in the secreted. In terms of biological role, has bacteriocidal activity against some Gram-positive bacteria such as Listeria, some species of Bacillus and E.faecium. A single mutation (Thr-14-Ile) confers hemolytic activity against rabbit and human blood. This chain is Subtilosin-A (sboA), found in Bacillus subtilis (strain 168).